A 292-amino-acid chain; its full sequence is Nucleotide-binding protein Ldb0621 (292 aa).

14–21 (GMSGAGKT) lines the ATP pocket. 64–67 (DLRV) serves as a coordination point for GTP.

It belongs to the RapZ-like family.

Displays ATPase and GTPase activities. This Lactobacillus delbrueckii subsp. bulgaricus (strain ATCC 11842 / DSM 20081 / BCRC 10696 / JCM 1002 / NBRC 13953 / NCIMB 11778 / NCTC 12712 / WDCM 00102 / Lb 14) protein is Nucleotide-binding protein Ldb0621.